Reading from the N-terminus, the 193-residue chain is Ion-translocating oxidoreductase complex subunit A (193 aa).

Helical transmembrane passes span 5-25, 39-59, 72-92, 102-122, 134-154, and 171-191; these read ILLI…FLGL, IGMG…AYLV, LRTL…EMVI, LLGI…VALL, VIYG…FAAL, and SIAL…SGLV.

The protein belongs to the NqrDE/RnfAE family. The complex is composed of six subunits: RnfA, RnfB, RnfC, RnfD, RnfE and RnfG.

The protein localises to the cell inner membrane. In terms of biological role, part of a membrane-bound complex that couples electron transfer with translocation of ions across the membrane. The protein is Ion-translocating oxidoreductase complex subunit A of Histophilus somni (strain 2336) (Haemophilus somnus).